A 1071-amino-acid chain; its full sequence is DNA-directed RNA polymerase subunit beta (1071 aa).

This sequence belongs to the RNA polymerase beta chain family. As to quaternary structure, in plastids the minimal PEP RNA polymerase catalytic core is composed of four subunits: alpha, beta, beta', and beta''. When a (nuclear-encoded) sigma factor is associated with the core the holoenzyme is formed, which can initiate transcription.

The protein localises to the plastid. The protein resides in the chloroplast. The catalysed reaction is RNA(n) + a ribonucleoside 5'-triphosphate = RNA(n+1) + diphosphate. Functionally, DNA-dependent RNA polymerase catalyzes the transcription of DNA into RNA using the four ribonucleoside triphosphates as substrates. The protein is DNA-directed RNA polymerase subunit beta of Acorus calamus (Sweet flag).